We begin with the raw amino-acid sequence, 268 residues long: Ubiquinone biosynthesis protein COQ4 homolog, mitochondrial (268 aa).

Residues His171, Asp172, His175, and Glu187 each coordinate Zn(2+).

This sequence belongs to the COQ4 family. Component of a multi-subunit COQ enzyme complex. It depends on Zn(2+) as a cofactor.

Its subcellular location is the mitochondrion inner membrane. It catalyses the reaction a 4-hydroxy-3-methoxy-5-(all-trans-polyprenyl)benzoate + H(+) = a 2-methoxy-6-(all-trans-polyprenyl)phenol + CO2. It functions in the pathway cofactor biosynthesis; ubiquinone biosynthesis. Lyase that catalyzes the C1-decarboxylation of 4-hydroxy-3-methoxy-5-(all-trans-polyprenyl)benzoic acid into 2-methoxy-6-(all-trans-polyprenyl)phenol during ubiquinone biosynthesis. The chain is Ubiquinone biosynthesis protein COQ4 homolog, mitochondrial from Drosophila sechellia (Fruit fly).